The sequence spans 840 residues: Probable alpha-glucuronidase A (840 aa).

The signal sequence occupies residues 1–19; that stretch reads MWSGIPIFALLSSIGIAAA. N-linked (GlcNAc...) asparagine glycosylation is found at Asn50, Asn149, Asn222, Asn262, Asn279, Asn310, Asn465, Asn527, Asn576, Asn610, Asn682, Asn723, and Asn732.

It belongs to the glycosyl hydrolase 67 family.

It localises to the secreted. It catalyses the reaction an alpha-D-glucuronoside + H2O = D-glucuronate + an alcohol. In terms of biological role, alpha-glucuronidase involved in the hydrolysis of xylan, a major structural heterogeneous polysaccharide found in plant biomass representing the second most abundant polysaccharide in the biosphere, after cellulose. Releases 4-O-methylglucuronic acid from xylan. In Aspergillus fumigatus (strain ATCC MYA-4609 / CBS 101355 / FGSC A1100 / Af293) (Neosartorya fumigata), this protein is Probable alpha-glucuronidase A (aguA).